Here is a 100-residue protein sequence, read N- to C-terminus: DNA-directed RNA polymerase subunit Rpo11 (100 aa).

It belongs to the archaeal Rpo11/eukaryotic RPB11/RPC19 RNA polymerase subunit family. In terms of assembly, part of the RNA polymerase complex.

The protein resides in the cytoplasm. It catalyses the reaction RNA(n) + a ribonucleoside 5'-triphosphate = RNA(n+1) + diphosphate. DNA-dependent RNA polymerase (RNAP) catalyzes the transcription of DNA into RNA using the four ribonucleoside triphosphates as substrates. In Picrophilus torridus (strain ATCC 700027 / DSM 9790 / JCM 10055 / NBRC 100828 / KAW 2/3), this protein is DNA-directed RNA polymerase subunit Rpo11.